The chain runs to 378 residues: Anhydro-N-acetylmuramic acid kinase (378 aa).

An ATP-binding site is contributed by 9–16 (GTSVDGID).

Belongs to the anhydro-N-acetylmuramic acid kinase family.

The enzyme catalyses 1,6-anhydro-N-acetyl-beta-muramate + ATP + H2O = N-acetyl-D-muramate 6-phosphate + ADP + H(+). It functions in the pathway amino-sugar metabolism; 1,6-anhydro-N-acetylmuramate degradation. Its pathway is cell wall biogenesis; peptidoglycan recycling. Functionally, catalyzes the specific phosphorylation of 1,6-anhydro-N-acetylmuramic acid (anhMurNAc) with the simultaneous cleavage of the 1,6-anhydro ring, generating MurNAc-6-P. Is required for the utilization of anhMurNAc either imported from the medium or derived from its own cell wall murein, and thus plays a role in cell wall recycling. The sequence is that of Anhydro-N-acetylmuramic acid kinase from Microcystis aeruginosa (strain NIES-843 / IAM M-2473).